A 578-amino-acid chain; its full sequence is Proline--tRNA ligase (578 aa).

This sequence belongs to the class-II aminoacyl-tRNA synthetase family. ProS type 1 subfamily. As to quaternary structure, homodimer.

Its subcellular location is the cytoplasm. The catalysed reaction is tRNA(Pro) + L-proline + ATP = L-prolyl-tRNA(Pro) + AMP + diphosphate. Functionally, catalyzes the attachment of proline to tRNA(Pro) in a two-step reaction: proline is first activated by ATP to form Pro-AMP and then transferred to the acceptor end of tRNA(Pro). As ProRS can inadvertently accommodate and process non-cognate amino acids such as alanine and cysteine, to avoid such errors it has two additional distinct editing activities against alanine. One activity is designated as 'pretransfer' editing and involves the tRNA(Pro)-independent hydrolysis of activated Ala-AMP. The other activity is designated 'posttransfer' editing and involves deacylation of mischarged Ala-tRNA(Pro). The misacylated Cys-tRNA(Pro) is not edited by ProRS. The chain is Proline--tRNA ligase from Paraburkholderia xenovorans (strain LB400).